Reading from the N-terminus, the 686-residue chain is Rhophilin-2 (686 aa).

The 75-residue stretch at 26 to 100 folds into the REM-1 domain; it reads NPLAQTGRSK…LEGLNISVGV (75 aa). Positions 46–66 are interaction with Rho; that stretch reads QILKAMRMRTGAENLLKAATN. In terms of domain architecture, BRO1 spans 111–460; the sequence is PLIPLGLKET…QLKYTQLRED (350 aa). Residues 515 to 593 enclose the PDZ domain; sequence RSIHFTAEEG…DDIEMKVVSL (79 aa). Thr-655 is modified (phosphothreonine).

The protein belongs to the RHPN family. As to quaternary structure, interacts with GTP-bound RhoA and RhoB. Interacts with both GTP- and GDP-bound RhoA. Interacts with KRT18.

The protein resides in the cytoplasm. The protein localises to the perinuclear region. Functionally, binds specifically to GTP-Rho. May function in a Rho pathway to limit stress fiber formation and/or increase the turnover of F-actin structures in the absence of high levels of RhoA activity. This is Rhophilin-2 (RHPN2) from Bos taurus (Bovine).